The following is a 455-amino-acid chain: D-inositol 3-phosphate glycosyltransferase (455 aa).

The tract at residues 1–25 (MSQHVSRLGGLRGRSHGHGAFGGPY) is disordered. H45 serves as a coordination point for 1D-myo-inositol 3-phosphate. UDP-N-acetyl-alpha-D-glucosamine is bound by residues 51 to 52 (QP) and G59. Residues 56-61 (DAGGMN), K114, Y147, T171, and R191 each bind 1D-myo-inositol 3-phosphate. Residues R266 and K271 each coordinate UDP-N-acetyl-alpha-D-glucosamine. The Mg(2+) site is built by Y341, R342, and A344. Residues E354 and E362 each contribute to the UDP-N-acetyl-alpha-D-glucosamine site. A Mg(2+)-binding site is contributed by T368.

The protein belongs to the glycosyltransferase group 1 family. MshA subfamily. As to quaternary structure, homodimer.

It catalyses the reaction 1D-myo-inositol 3-phosphate + UDP-N-acetyl-alpha-D-glucosamine = 1D-myo-inositol 2-acetamido-2-deoxy-alpha-D-glucopyranoside 3-phosphate + UDP + H(+). Functionally, catalyzes the transfer of a N-acetyl-glucosamine moiety to 1D-myo-inositol 3-phosphate to produce 1D-myo-inositol 2-acetamido-2-deoxy-glucopyranoside 3-phosphate in the mycothiol biosynthesis pathway. The protein is D-inositol 3-phosphate glycosyltransferase of Streptomyces bingchenggensis (strain BCW-1).